The chain runs to 258 residues: Tryptophan synthase alpha chain (258 aa).

Active-site proton acceptor residues include Glu52 and Asp63.

This sequence belongs to the TrpA family. As to quaternary structure, tetramer of two alpha and two beta chains.

It carries out the reaction (1S,2R)-1-C-(indol-3-yl)glycerol 3-phosphate + L-serine = D-glyceraldehyde 3-phosphate + L-tryptophan + H2O. It participates in amino-acid biosynthesis; L-tryptophan biosynthesis; L-tryptophan from chorismate: step 5/5. Functionally, the alpha subunit is responsible for the aldol cleavage of indoleglycerol phosphate to indole and glyceraldehyde 3-phosphate. The polypeptide is Tryptophan synthase alpha chain (Streptococcus pneumoniae (strain JJA)).